The chain runs to 453 residues: Bifunctional protein GlmU (453 aa).

The segment at 1 to 226 (MKFSTVILAA…SIEVEGVNDR (226 aa)) is pyrophosphorylase. UDP-N-acetyl-alpha-D-glucosamine-binding positions include 8-11 (LAAG), Lys22, Gln73, 78-79 (GT), 100-102 (YGD), Gly137, Glu151, Asn166, and Asn224. Asp102 contacts Mg(2+). Residue Asn224 participates in Mg(2+) binding. The linker stretch occupies residues 227–247 (IQLARLERAFQARQAKKLLEQ). The N-acetyltransferase stretch occupies residues 248–453 (GVMLRDPARF…AGWQRPAKKK (206 aa)). Residues Arg330 and Lys348 each coordinate UDP-N-acetyl-alpha-D-glucosamine. Residue His360 is the Proton acceptor of the active site. Tyr363 and Asn374 together coordinate UDP-N-acetyl-alpha-D-glucosamine. Residues Ala377, 383–384 (NY), Ser402, Ala420, and Arg437 each bind acetyl-CoA.

In the N-terminal section; belongs to the N-acetylglucosamine-1-phosphate uridyltransferase family. The protein in the C-terminal section; belongs to the transferase hexapeptide repeat family. In terms of assembly, homotrimer. The cofactor is Mg(2+).

It localises to the cytoplasm. It carries out the reaction alpha-D-glucosamine 1-phosphate + acetyl-CoA = N-acetyl-alpha-D-glucosamine 1-phosphate + CoA + H(+). The catalysed reaction is N-acetyl-alpha-D-glucosamine 1-phosphate + UTP + H(+) = UDP-N-acetyl-alpha-D-glucosamine + diphosphate. Its pathway is nucleotide-sugar biosynthesis; UDP-N-acetyl-alpha-D-glucosamine biosynthesis; N-acetyl-alpha-D-glucosamine 1-phosphate from alpha-D-glucosamine 6-phosphate (route II): step 2/2. The protein operates within nucleotide-sugar biosynthesis; UDP-N-acetyl-alpha-D-glucosamine biosynthesis; UDP-N-acetyl-alpha-D-glucosamine from N-acetyl-alpha-D-glucosamine 1-phosphate: step 1/1. It functions in the pathway bacterial outer membrane biogenesis; LPS lipid A biosynthesis. Its function is as follows. Catalyzes the last two sequential reactions in the de novo biosynthetic pathway for UDP-N-acetylglucosamine (UDP-GlcNAc). The C-terminal domain catalyzes the transfer of acetyl group from acetyl coenzyme A to glucosamine-1-phosphate (GlcN-1-P) to produce N-acetylglucosamine-1-phosphate (GlcNAc-1-P), which is converted into UDP-GlcNAc by the transfer of uridine 5-monophosphate (from uridine 5-triphosphate), a reaction catalyzed by the N-terminal domain. This is Bifunctional protein GlmU from Vibrio cholerae serotype O1 (strain ATCC 39541 / Classical Ogawa 395 / O395).